Reading from the N-terminus, the 430-residue chain is Adenylosuccinate synthetase (430 aa).

GTP is bound by residues Gly-12–Lys-18 and Gly-40–Thr-42. The active-site Proton acceptor is the Asp-13. Mg(2+) is bound by residues Asp-13 and Gly-40. Residues Asp-13–Lys-16, Asn-38–His-41, Thr-128, Arg-142, Gln-223, Thr-238, and Arg-302 each bind IMP. Catalysis depends on His-41, which acts as the Proton donor. A substrate-binding site is contributed by Thr-298–Arg-304. Residues Arg-304, Ser-330–Asp-332, and Ser-412–Gly-414 contribute to the GTP site.

The protein belongs to the adenylosuccinate synthetase family. Homodimer. Requires Mg(2+) as cofactor.

It localises to the cytoplasm. The enzyme catalyses IMP + L-aspartate + GTP = N(6)-(1,2-dicarboxyethyl)-AMP + GDP + phosphate + 2 H(+). Its pathway is purine metabolism; AMP biosynthesis via de novo pathway; AMP from IMP: step 1/2. Its function is as follows. Plays an important role in the de novo pathway of purine nucleotide biosynthesis. Catalyzes the first committed step in the biosynthesis of AMP from IMP. This is Adenylosuccinate synthetase from Streptococcus agalactiae serotype III (strain NEM316).